The following is a 342-amino-acid chain: Terpene cyclase resF (342 aa).

5 helical membrane-spanning segments follow: residues 5–25 (VSVV…GVFA), 81–101 (FMAQ…TEDF), 115–135 (WGVF…GVCF), 151–171 (STWI…MLIF), and 182–202 (IWGV…ASLL). An N-linked (GlcNAc...) asparagine glycan is attached at N224. The next 3 helical transmembrane spans lie at 229-249 (YVVA…FHLG), 269-289 (FLQI…WHEL), and 305-325 (YLLL…AWAL).

It belongs to the membrane-bound ascI terpene cyclase family.

The protein resides in the membrane. It functions in the pathway antifungal biosynthesis. In terms of biological role, cyclase; part of the gene cluster that mediates the biosynthesis of the tetrahydropyranyl antifungal agent restricticin that acts as an inhibitor of CYP51 and blocks the ergosterol biosynthesis. The highly reducing polyketide synthase resH, the short chain dehydrogenase resG, the cyclase resF, the FAD-dependent monooxygenase resA and the enoylreductase resD are required to generate the first stable intermediate desmethylrestrictinol. ResH with resD biosynthesize the first polyketide chain intermediate that is reduced by resG, followed by epoxidation by resA before 6-endo cyclization via epoxide opening by resF leads to desmethylrestrictinol. The methyltransferase resE then catalyzes the C4 O-methylation of desmethylrestrictinol to produce restrictinol, and the nonribosomal peptide synthetase resC catalyzes the C3 esterification of restrictinol with glycine that leads to restricticin. In Aspergillus sclerotiorum, this protein is Terpene cyclase resF.